The chain runs to 349 residues: Hydroxymethylglutaryl-CoA synthase (349 aa).

D29 is a (3S)-3-hydroxy-3-methylglutaryl-CoA binding site. The active-site Proton donor/acceptor is the E81. Positions 113, 154, 202, and 235 each coordinate (3S)-3-hydroxy-3-methylglutaryl-CoA. The active-site Acyl-thioester intermediate is the C113. H235 functions as the Proton donor/acceptor in the catalytic mechanism. R240 lines the CoA pocket. (3S)-3-hydroxy-3-methylglutaryl-CoA-binding residues include R244, N267, and S297.

This sequence belongs to the thiolase-like superfamily. Archaeal HMG-CoA synthase family. In terms of assembly, interacts with acetoacetyl-CoA thiolase that catalyzes the precedent step in the pathway and with a DUF35 protein. The acetoacetyl-CoA thiolase/HMG-CoA synthase complex channels the intermediate via a fused CoA-binding site, which allows for efficient coupling of the endergonic thiolase reaction with the exergonic HMGCS reaction.

The catalysed reaction is acetoacetyl-CoA + acetyl-CoA + H2O = (3S)-3-hydroxy-3-methylglutaryl-CoA + CoA + H(+). It participates in metabolic intermediate biosynthesis; (R)-mevalonate biosynthesis; (R)-mevalonate from acetyl-CoA: step 2/3. Its function is as follows. Catalyzes the condensation of acetyl-CoA with acetoacetyl-CoA to form 3-hydroxy-3-methylglutaryl-CoA (HMG-CoA). Functions in the mevalonate (MVA) pathway leading to isopentenyl diphosphate (IPP), a key precursor for the biosynthesis of isoprenoid compounds that are building blocks of archaeal membrane lipids. The polypeptide is Hydroxymethylglutaryl-CoA synthase (Pyrobaculum arsenaticum (strain DSM 13514 / JCM 11321 / PZ6)).